The chain runs to 124 residues: Apolipoprotein C-IV (124 aa).

A signal peptide spans 1 to 27 (MSLLRCRQQTLPSLCLSVLFLACFVAS).

This sequence belongs to the apolipoprotein C4 family.

It is found in the secreted. Functionally, may participate in lipoprotein metabolism. The chain is Apolipoprotein C-IV (Apoc4) from Rattus norvegicus (Rat).